A 131-amino-acid chain; its full sequence is Holo-[acyl-carrier-protein] synthase (131 aa).

The Mg(2+) site is built by Asp8 and Glu57.

The protein belongs to the P-Pant transferase superfamily. AcpS family. Mg(2+) is required as a cofactor.

It is found in the cytoplasm. The enzyme catalyses apo-[ACP] + CoA = holo-[ACP] + adenosine 3',5'-bisphosphate + H(+). Functionally, transfers the 4'-phosphopantetheine moiety from coenzyme A to a Ser of acyl-carrier-protein. The polypeptide is Holo-[acyl-carrier-protein] synthase (Thiobacillus denitrificans (strain ATCC 25259 / T1)).